We begin with the raw amino-acid sequence, 43 residues long: Protein PsbN (43 aa).

The chain crosses the membrane as a helical span at residues 7–27 (VAIFISGLLVSFTGYALYTAF).

This sequence belongs to the PsbN family.

It is found in the plastid. The protein resides in the chloroplast thylakoid membrane. May play a role in photosystem I and II biogenesis. The chain is Protein PsbN from Sagittaria latifolia (Broadleaf arrowhead).